Reading from the N-terminus, the 382-residue chain is Na(+)/H(+) antiporter NhaA (382 aa).

Transmembrane regions (helical) follow at residues 13-33 (IGGI…NSPF), 58-78 (LLLW…GLEI), 94-114 (LVPA…FIFF), 124-144 (GWAI…SLLG), 153-173 (ILLT…IALF), 179-199 (SLLS…LNYF), 204-224 (ISVF…SGVH), 256-276 (VVFL…FVGL), 285-305 (VVLG…FLSL), 325-345 (VYGI…IGSL), and 357-377 (MVKI…FLVL).

The protein belongs to the NhaA Na(+)/H(+) (TC 2.A.33) antiporter family.

It is found in the cell inner membrane. The enzyme catalyses Na(+)(in) + 2 H(+)(out) = Na(+)(out) + 2 H(+)(in). In terms of biological role, na(+)/H(+) antiporter that extrudes sodium in exchange for external protons. This Legionella pneumophila (strain Paris) protein is Na(+)/H(+) antiporter NhaA.